Consider the following 94-residue polypeptide: Co-chaperonin GroES (94 aa).

The protein belongs to the GroES chaperonin family. Heptamer of 7 subunits arranged in a ring. Interacts with the chaperonin GroEL.

It localises to the cytoplasm. Together with the chaperonin GroEL, plays an essential role in assisting protein folding. The GroEL-GroES system forms a nano-cage that allows encapsulation of the non-native substrate proteins and provides a physical environment optimized to promote and accelerate protein folding. GroES binds to the apical surface of the GroEL ring, thereby capping the opening of the GroEL channel. This Orientia tsutsugamushi (Rickettsia tsutsugamushi) protein is Co-chaperonin GroES.